The primary structure comprises 899 residues: DNA mismatch repair protein MutS (899 aa).

Residues methionine 1–arginine 20 form a disordered region. Residue glycine 631 to serine 638 coordinates ATP. The disordered stretch occupies residues proline 832–proline 852. Positions glycine 843–proline 852 are enriched in low complexity.

This sequence belongs to the DNA mismatch repair MutS family.

Its function is as follows. This protein is involved in the repair of mismatches in DNA. It is possible that it carries out the mismatch recognition step. This protein has a weak ATPase activity. This Cupriavidus necator (strain ATCC 17699 / DSM 428 / KCTC 22496 / NCIMB 10442 / H16 / Stanier 337) (Ralstonia eutropha) protein is DNA mismatch repair protein MutS.